Here is a 198-residue protein sequence, read N- to C-terminus: Prostamide/prostaglandin F synthase (198 aa).

Residue Tyr-108 is modified to Phosphotyrosine.

It belongs to the peroxiredoxin-like PRXL2 family. Prostamide/prostaglandin F synthase subfamily.

It localises to the cytoplasm. It is found in the cytosol. The catalysed reaction is prostaglandin H2 + [thioredoxin]-dithiol = prostaglandin F2alpha + [thioredoxin]-disulfide. It carries out the reaction prostamide F2alpha + [thioredoxin]-disulfide = prostamide H2 + [thioredoxin]-dithiol. Functionally, catalyzes the reduction of prostaglandin-ethanolamide H(2) (prostamide H(2)) to prostamide F(2alpha) with NADPH as proton donor. Also able to reduce prostaglandin H(2) to prostaglandin F(2alpha). This is Prostamide/prostaglandin F synthase from Homo sapiens (Human).